Here is a 239-residue protein sequence, read N- to C-terminus: 2-C-methyl-D-erythritol 4-phosphate cytidylyltransferase (239 aa).

The protein belongs to the IspD/TarI cytidylyltransferase family. IspD subfamily.

It catalyses the reaction 2-C-methyl-D-erythritol 4-phosphate + CTP + H(+) = 4-CDP-2-C-methyl-D-erythritol + diphosphate. The protein operates within isoprenoid biosynthesis; isopentenyl diphosphate biosynthesis via DXP pathway; isopentenyl diphosphate from 1-deoxy-D-xylulose 5-phosphate: step 2/6. Catalyzes the formation of 4-diphosphocytidyl-2-C-methyl-D-erythritol from CTP and 2-C-methyl-D-erythritol 4-phosphate (MEP). The chain is 2-C-methyl-D-erythritol 4-phosphate cytidylyltransferase from Acinetobacter baylyi (strain ATCC 33305 / BD413 / ADP1).